The following is a 247-amino-acid chain: Membrane-embedded CAAX protease MroQ (247 aa).

An N-terminal signal peptide occupies residues 1–17; the sequence is MTRLWASLLTVIIYILS. 3 consecutive transmembrane segments (helical) span residues 42 to 62, 81 to 101, and 119 to 139; these read VIYI…LINL, IIPW…VVSI, and LIII…IGPL. Glu-141 is a catalytic residue. 2 helical membrane passes run 162 to 182 and 183 to 203; these read IVAF…AHND and FKFI…YVWT.

It belongs to the peptidase U48 family.

The protein localises to the membrane. Its function is as follows. Participates in the regulation of the Agr quorum sensing activity and plays thereby an important role in virulence. Mechanistically, elicits a protease dependent control of Agr activity without playing a role in the processing of the pheromone-precursor AgrD. This is Membrane-embedded CAAX protease MroQ (mroQ) from Staphylococcus aureus (strain USA300).